Reading from the N-terminus, the 260-residue chain is 1-(5-phosphoribosyl)-5-[(5-phosphoribosylamino)methylideneamino] imidazole-4-carboxamide isomerase (260 aa).

Asp-8 functions as the Proton acceptor in the catalytic mechanism. The Proton donor role is filled by Asp-130.

It belongs to the HisA/HisF family.

The protein localises to the cytoplasm. The catalysed reaction is 1-(5-phospho-beta-D-ribosyl)-5-[(5-phospho-beta-D-ribosylamino)methylideneamino]imidazole-4-carboxamide = 5-[(5-phospho-1-deoxy-D-ribulos-1-ylimino)methylamino]-1-(5-phospho-beta-D-ribosyl)imidazole-4-carboxamide. It participates in amino-acid biosynthesis; L-histidine biosynthesis; L-histidine from 5-phospho-alpha-D-ribose 1-diphosphate: step 4/9. The sequence is that of 1-(5-phosphoribosyl)-5-[(5-phosphoribosylamino)methylideneamino] imidazole-4-carboxamide isomerase from Chlorobaculum parvum (strain DSM 263 / NCIMB 8327) (Chlorobium vibrioforme subsp. thiosulfatophilum).